The sequence spans 466 residues: Fumarate hydratase class II (466 aa).

Residues 99-101 (SGT), 129-132 (HPND), 139-141 (SSN), and T187 each bind substrate. H188 functions as the Proton donor/acceptor in the catalytic mechanism. S318 is a catalytic residue. Substrate contacts are provided by residues S319 and 324–326 (KVN).

The protein belongs to the class-II fumarase/aspartase family. Fumarase subfamily. Homotetramer.

Its subcellular location is the cytoplasm. The enzyme catalyses (S)-malate = fumarate + H2O. It functions in the pathway carbohydrate metabolism; tricarboxylic acid cycle; (S)-malate from fumarate: step 1/1. Involved in the TCA cycle. Catalyzes the stereospecific interconversion of fumarate to L-malate. The polypeptide is Fumarate hydratase class II (Thermus aquaticus).